The following is a 465-amino-acid chain: Gamma-aminobutyric acid receptor subunit alpha-6 (465 aa).

The N-terminal stretch at 1–19 (MALLIAWVCVAVSIEKALG) is a signal peptide. The Extracellular segment spans residues 20-243 (GQGDGGDLYS…FHLQRKMGYF (224 aa)). An N-linked (GlcNAc...) asparagine glycan is attached at Asn31. A 4-aminobutanoate-binding site is contributed by Arg84. Asn128 and Asn141 each carry an N-linked (GlcNAc...) asparagine glycan. Thr147 serves as a coordination point for 4-aminobutanoate. The cysteines at positions 156 and 170 are disulfide-linked. A helical transmembrane segment spans residues 244-264 (MIQIYTPCIMTVILSQVSFWI). Residues 265–270 (NKESVP) lie on the Cytoplasmic side of the membrane. The helical transmembrane segment at 271–290 (ARTVFGITTVLTMTTLSISA) threads the bilayer. At 291–304 (RHSLPKVSYATAMD) the chain is on the extracellular side. Residues 305–325 (WFIAVCFAFVFSALIEFAAVN) traverse the membrane as a helical segment. The Cytoplasmic portion of the chain corresponds to 326–424 (YFTNLQTQRA…GTSKIDQYSR (99 aa)). The segment at 392–415 (NSASQCQPVSAPPPAPPAPPPVGG) is disordered. Over residues 401-413 (SAPPPAPPAPPPV) the composition is skewed to pro residues. The helical transmembrane segment at 425–445 (ILFPVAFAGFNLVYWVVYLSK) threads the bilayer. At 446 to 465 (DTMEFFEPTAMHLRNDHQSN) the chain is on the extracellular side.

The protein belongs to the ligand-gated ion channel (TC 1.A.9) family. Gamma-aminobutyric acid receptor (TC 1.A.9.5) subfamily. GABRA6 sub-subfamily. As to quaternary structure, heteropentamer, formed by a combination of alpha (GABRA1-6), beta (GABRB1-3), gamma (GABRG1-3), delta (GABRD), epsilon (GABRE), rho (GABRR1-3), pi (GABRP) and theta (GABRQ) chains, each subunit exhibiting distinct physiological and pharmacological properties. In terms of tissue distribution, expressed in brain, in cerebellar granule cells.

Its subcellular location is the postsynaptic cell membrane. It localises to the cell membrane. The enzyme catalyses chloride(in) = chloride(out). Functionally, alpha subunit of the heteropentameric ligand-gated chloride channel gated by gamma-aminobutyric acid (GABA), a major inhibitory neurotransmitter in the brain. GABA-gated chloride channels, also named GABA(A) receptors (GABAAR), consist of five subunits arranged around a central pore and contain GABA active binding site(s) located at the alpha and beta subunit interface(s). When activated by GABA, GABAARs selectively allow the flow of chloride anions across the cell membrane down their electrochemical gradient. In Gallus gallus (Chicken), this protein is Gamma-aminobutyric acid receptor subunit alpha-6 (GABRA6).